Here is a 285-residue protein sequence, read N- to C-terminus: Probable endonuclease 4 (285 aa).

The Zn(2+) site is built by His-69, His-109, Glu-145, Asp-179, His-182, His-216, Asp-229, His-231, and Glu-261.

It belongs to the AP endonuclease 2 family. Zn(2+) serves as cofactor.

The catalysed reaction is Endonucleolytic cleavage to 5'-phosphooligonucleotide end-products.. In terms of biological role, endonuclease IV plays a role in DNA repair. It cleaves phosphodiester bonds at apurinic or apyrimidinic (AP) sites, generating a 3'-hydroxyl group and a 5'-terminal sugar phosphate. This Escherichia coli (strain SMS-3-5 / SECEC) protein is Probable endonuclease 4.